A 71-amino-acid polypeptide reads, in one-letter code: uncharacterized protein (71 aa).

This is an uncharacterized protein from Methanocaldococcus jannaschii (strain ATCC 43067 / DSM 2661 / JAL-1 / JCM 10045 / NBRC 100440) (Methanococcus jannaschii).